The following is a 38-amino-acid chain: uncharacterized protein (38 aa).

The protein belongs to the asfivirus C84L family.

This is an uncharacterized protein from Ornithodoros (relapsing fever ticks).